A 449-amino-acid chain; its full sequence is Glucose-6-phosphate isomerase (449 aa).

The active-site Proton donor is the E291. Active-site residues include H312 and K426.

This sequence belongs to the GPI family.

It localises to the cytoplasm. It carries out the reaction alpha-D-glucose 6-phosphate = beta-D-fructose 6-phosphate. Its pathway is carbohydrate biosynthesis; gluconeogenesis. It functions in the pathway carbohydrate degradation; glycolysis; D-glyceraldehyde 3-phosphate and glycerone phosphate from D-glucose: step 2/4. Functionally, catalyzes the reversible isomerization of glucose-6-phosphate to fructose-6-phosphate. This Streptococcus pyogenes serotype M3 (strain ATCC BAA-595 / MGAS315) protein is Glucose-6-phosphate isomerase.